The chain runs to 652 residues: Acetyl-coenzyme A synthetase (652 aa).

CoA-binding positions include 191-194 (RAGR), threonine 311, and asparagine 335. Residues 387 to 389 (GEP), 411 to 416 (DTWWQT), aspartate 500, and arginine 515 contribute to the ATP site. A CoA-binding site is contributed by serine 523. Arginine 526 lines the ATP pocket. Mg(2+) is bound by residues valine 537, histidine 539, and isoleucine 542. Arginine 584 serves as a coordination point for CoA. The residue at position 609 (lysine 609) is an N6-acetyllysine.

This sequence belongs to the ATP-dependent AMP-binding enzyme family. Requires Mg(2+) as cofactor. In terms of processing, acetylated. Deacetylation by the SIR2-homolog deacetylase activates the enzyme.

The enzyme catalyses acetate + ATP + CoA = acetyl-CoA + AMP + diphosphate. Functionally, catalyzes the conversion of acetate into acetyl-CoA (AcCoA), an essential intermediate at the junction of anabolic and catabolic pathways. Acs undergoes a two-step reaction. In the first half reaction, Acs combines acetate with ATP to form acetyl-adenylate (AcAMP) intermediate. In the second half reaction, it can then transfer the acetyl group from AcAMP to the sulfhydryl group of CoA, forming the product AcCoA. Its function is as follows. Enables the cell to use acetate during aerobic growth to generate energy via the TCA cycle, and biosynthetic compounds via the glyoxylate shunt. Acetylates CheY, the response regulator involved in flagellar movement and chemotaxis. This is Acetyl-coenzyme A synthetase from Yersinia pestis.